We begin with the raw amino-acid sequence, 193 residues long: Naphthalene 1,2-dioxygenase system, small oxygenase component (193 aa).

Belongs to the bacterial ring-hydroxylating dioxygenase beta subunit family. In terms of assembly, the naphthalene dioxygenase (NDO) multicomponent enzyme system is composed of an electron transfer component and a dioxygenase component (iron sulfur protein (ISP)). The electron transfer component is composed of a ferredoxin reductase (NdoR) and a ferredoxin (NdoA), and the dioxygenase component is formed of a heterohexamer (trimer of heterodimers) of three large alpha subunits (NdoB) and three small beta subunits (NdoC).

It functions in the pathway aromatic compound metabolism; naphthalene degradation. Its function is as follows. Component of the naphthalene dioxygenase (NDO) multicomponent enzyme system which catalyzes the incorporation of both atoms of molecular oxygen into naphthalene to form cis-(1R,2S)-dihydroxy-1,2-dihydronaphthalene. The beta subunit seems to have a structural role in the holoenzyme. This chain is Naphthalene 1,2-dioxygenase system, small oxygenase component, found in Pseudomonas aeruginosa.